The sequence spans 407 residues: Tryptophan synthase beta chain (407 aa).

Position 91 is an N6-(pyridoxal phosphate)lysine (K91).

Belongs to the TrpB family. Tetramer of two alpha and two beta chains. Requires pyridoxal 5'-phosphate as cofactor.

It carries out the reaction (1S,2R)-1-C-(indol-3-yl)glycerol 3-phosphate + L-serine = D-glyceraldehyde 3-phosphate + L-tryptophan + H2O. It functions in the pathway amino-acid biosynthesis; L-tryptophan biosynthesis; L-tryptophan from chorismate: step 5/5. Functionally, the beta subunit is responsible for the synthesis of L-tryptophan from indole and L-serine. The protein is Tryptophan synthase beta chain of Streptococcus pneumoniae (strain P1031).